Here is a 247-residue protein sequence, read N- to C-terminus: ATP synthase subunit a, chloroplastic (247 aa).

5 consecutive transmembrane segments (helical) span residues 38–58 (QVLI…TIAV), 95–115 (VPFI…GALF), 134–154 (INTT…AGLT), 199–219 (LVVV…VMFL), and 220–240 (GLFT…AYIG).

Belongs to the ATPase A chain family. As to quaternary structure, F-type ATPases have 2 components, CF(1) - the catalytic core - and CF(0) - the membrane proton channel. CF(1) has five subunits: alpha(3), beta(3), gamma(1), delta(1), epsilon(1). CF(0) has four main subunits: a, b, b' and c.

It is found in the plastid. The protein localises to the chloroplast thylakoid membrane. Its function is as follows. Key component of the proton channel; it plays a direct role in the translocation of protons across the membrane. The polypeptide is ATP synthase subunit a, chloroplastic (Piper cenocladum (Ant piper)).